Consider the following 196-residue polypeptide: Nucleoside triphosphate pyrophosphatase (196 aa).

The active-site Proton acceptor is the Asp-70.

Belongs to the Maf family. It depends on a divalent metal cation as a cofactor.

It is found in the cytoplasm. It catalyses the reaction a ribonucleoside 5'-triphosphate + H2O = a ribonucleoside 5'-phosphate + diphosphate + H(+). The catalysed reaction is a 2'-deoxyribonucleoside 5'-triphosphate + H2O = a 2'-deoxyribonucleoside 5'-phosphate + diphosphate + H(+). Functionally, nucleoside triphosphate pyrophosphatase. May have a dual role in cell division arrest and in preventing the incorporation of modified nucleotides into cellular nucleic acids. This is Nucleoside triphosphate pyrophosphatase from Gloeothece citriformis (strain PCC 7424) (Cyanothece sp. (strain PCC 7424)).